Here is a 285-residue protein sequence, read N- to C-terminus: Dioxygenase andF (285 aa).

Fe cation-binding residues include H128, D130, and H205.

This sequence belongs to the PhyH family. As to quaternary structure, homodimer. Fe cation is required as a cofactor.

Its pathway is secondary metabolite biosynthesis; terpenoid biosynthesis. Its function is as follows. Dioxygenase; part of the gene cluster that mediates the biosynthesis of anditomin, a fungal meroterpenoid. The first step of the pathway is the synthesis of 3,5-dimethylorsellinic acid (DMOA) by the polyketide synthase andM. DMOA is then converted to the phthalide compound 5,7-dihydroxy-4,6-dimethylphthalide (DHDMP) by the cytochrome P450 monooxygenase andK, which is further prenylated by the prenyltransferase andD to yield farnesyl-DHDMP. Further epoxidation by the FAD-dependent monooxygenase andE leads to epoxyfarnesyl-DHDMP. The next step involves the terpene cyclase andB that converts epoxyfarnesyl-DHDMP into preandiloid A through opening of the epoxide ring followed by the cyclization of the farnesyl moiety. Preandiloid A is in turn oxidized at the C-3 hydroxyl group to yield preandiloid B by the dehydrogenase andC. The dioxygenase andA is solely responsible for the dehydrogenation of preandiloid B leading to the enone preandiloid C, as well as for the intriguing structural rearrangement to generate the bicyclo[2.2.2]octane core, transforming preandiloid C into andiconin. FAD-binding monooxygenase andJ then produces andilesin D which is reduced by dehydrogenase andI to yield andilesin A. Action of acetyltransferase andG followed by a spontaneous acetate elimination leads then to andilesin B, which is in turn substrate of the short chain dehydrogenase andH to yield andilesin C. Finally, the dioxygenase andF catalyzes the transformation of andilesin C to anditomin. This Emericella variicolor (Aspergillus stellatus) protein is Dioxygenase andF.